The chain runs to 200 residues: Phospholipase A2 inhibitor gamma subunit B (200 aa).

An N-terminal signal peptide occupies residues 1 to 19; it reads MKFLLFCCLFGTFLATGMC. Cystine bridges form between Cys-22–Cys-46, Cys-25–Cys-32, Cys-39–Cys-67, Cys-73–Cys-94, Cys-95–Cys-100, Cys-120–Cys-145, Cys-138–Cys-165, and Cys-171–Cys-191. N-linked (GlcNAc...) asparagine glycosylation occurs at Asn-31.

The protein belongs to the CNF-like-inhibitor family. As to quaternary structure, heterodimer of subunit A and subunit B. In terms of processing, N-glycosylated. As to expression, expressed by the liver. Not expressed in esophagus, stomach, pancreas, spleen, gall bladder, small intestine, rectum, kidney, trachea, lung, testis and body fat.

The protein localises to the secreted. In terms of biological role, inhibits the enzymatic activity of phospholipase A2 (PA2). The polypeptide is Phospholipase A2 inhibitor gamma subunit B (Elaphe quadrivirgata (Japanese four-lined ratsnake)).